The chain runs to 980 residues: Putative leucine-rich repeat receptor-like serine/threonine-protein kinase At2g24130 (980 aa).

The N-terminal stretch at M1 to A20 is a signal peptide. The Extracellular portion of the chain corresponds to S21–S593. N-linked (GlcNAc...) asparagine glycans are attached at residues N55 and N88. 8 LRR repeats span residues S65–L89, T90–L113, E115–L138, N139–N162, S165–H189, K191–S214, T215–K238, and P240–P263. N152, N162, N175, and N213 each carry an N-linked (GlcNAc...) asparagine glycan. N257 and N270 each carry an N-linked (GlcNAc...) asparagine glycan. LRR repeat units follow at residues S271–L295, S296–L320, N322–L344, S345–R370, G372–N391, L392–C416, I417–N440, R442–L463, S464–C490, I491–L514, P515–Q537, and S539–K563. N-linked (GlcNAc...) asparagine glycans are attached at residues N322 and N327. N-linked (GlcNAc...) asparagine glycans are attached at residues N380 and N391. Residues N428 and N449 are each glycosylated (N-linked (GlcNAc...) asparagine). N-linked (GlcNAc...) asparagine glycosylation is present at N497. 2 N-linked (GlcNAc...) asparagine glycosylation sites follow: N545 and N554. The chain crosses the membrane as a helical span at residues V594–P614. Residues L615–S980 are Cytoplasmic-facing. The residue at position 658 (T658) is a Phosphothreonine. A Protein kinase domain is found at F661–L960. ATP contacts are provided by residues I667–V675 and K689. Y775 carries the post-translational modification Phosphotyrosine. The active-site Proton acceptor is D788. At Y841 the chain carries Phosphotyrosine.

The protein belongs to the protein kinase superfamily. Ser/Thr protein kinase family.

It is found in the cell membrane. The enzyme catalyses L-seryl-[protein] + ATP = O-phospho-L-seryl-[protein] + ADP + H(+). It catalyses the reaction L-threonyl-[protein] + ATP = O-phospho-L-threonyl-[protein] + ADP + H(+). The sequence is that of Putative leucine-rich repeat receptor-like serine/threonine-protein kinase At2g24130 from Arabidopsis thaliana (Mouse-ear cress).